The chain runs to 306 residues: Aspartate carbamoyltransferase catalytic subunit (306 aa).

Carbamoyl phosphate is bound by residues R55 and T56. Residue K84 coordinates L-aspartate. Carbamoyl phosphate-binding residues include R105, H133, and Q136. Residues R166 and R227 each contribute to the L-aspartate site. Positions 265 and 266 each coordinate carbamoyl phosphate.

It belongs to the aspartate/ornithine carbamoyltransferase superfamily. ATCase family. Heterododecamer (2C3:3R2) of six catalytic PyrB chains organized as two trimers (C3), and six regulatory PyrI chains organized as three dimers (R2).

It carries out the reaction carbamoyl phosphate + L-aspartate = N-carbamoyl-L-aspartate + phosphate + H(+). It participates in pyrimidine metabolism; UMP biosynthesis via de novo pathway; (S)-dihydroorotate from bicarbonate: step 2/3. Its function is as follows. Catalyzes the condensation of carbamoyl phosphate and aspartate to form carbamoyl aspartate and inorganic phosphate, the committed step in the de novo pyrimidine nucleotide biosynthesis pathway. This chain is Aspartate carbamoyltransferase catalytic subunit, found in Aeromonas hydrophila subsp. hydrophila (strain ATCC 7966 / DSM 30187 / BCRC 13018 / CCUG 14551 / JCM 1027 / KCTC 2358 / NCIMB 9240 / NCTC 8049).